Here is a 133-residue protein sequence, read N- to C-terminus: Small ribosomal subunit protein uS8 (133 aa).

The protein belongs to the universal ribosomal protein uS8 family. Part of the 30S ribosomal subunit. Contacts proteins S5 and S12.

One of the primary rRNA binding proteins, it binds directly to 16S rRNA central domain where it helps coordinate assembly of the platform of the 30S subunit. The sequence is that of Small ribosomal subunit protein uS8 from Prochlorococcus marinus (strain SARG / CCMP1375 / SS120).